The chain runs to 40 residues: Hemoglobin subunit alpha-2 (40 aa).

One can recognise a Globin domain in the interval 1–40 (VGPHLDDYGGEALHRNFEVYPQTKTYFPHFDASAGSNQLK).

This sequence belongs to the globin family. Heterotetramer of two alpha chains and two beta chains. Red blood cells.

Involved in oxygen transport from the lung to the various peripheral tissues. The protein is Hemoglobin subunit alpha-2 of Saara hardwickii (Indian spiny-tailed lizard).